Reading from the N-terminus, the 481-residue chain is Aspartyl/glutamyl-tRNA(Asn/Gln) amidotransferase subunit B (481 aa).

The protein belongs to the GatB/GatE family. GatB subfamily. Heterotrimer of A, B and C subunits.

The enzyme catalyses L-glutamyl-tRNA(Gln) + L-glutamine + ATP + H2O = L-glutaminyl-tRNA(Gln) + L-glutamate + ADP + phosphate + H(+). It catalyses the reaction L-aspartyl-tRNA(Asn) + L-glutamine + ATP + H2O = L-asparaginyl-tRNA(Asn) + L-glutamate + ADP + phosphate + 2 H(+). Allows the formation of correctly charged Asn-tRNA(Asn) or Gln-tRNA(Gln) through the transamidation of misacylated Asp-tRNA(Asn) or Glu-tRNA(Gln) in organisms which lack either or both of asparaginyl-tRNA or glutaminyl-tRNA synthetases. The reaction takes place in the presence of glutamine and ATP through an activated phospho-Asp-tRNA(Asn) or phospho-Glu-tRNA(Gln). The protein is Aspartyl/glutamyl-tRNA(Asn/Gln) amidotransferase subunit B of Ehrlichia ruminantium (strain Gardel).